The chain runs to 338 residues: Glycerol-3-phosphate dehydrogenase [NAD(P)+] (338 aa).

Positions 13, 14, and 108 each coordinate NADPH. Sn-glycerol 3-phosphate contacts are provided by lysine 108, glycine 139, and serine 141. Alanine 143 lines the NADPH pocket. The sn-glycerol 3-phosphate site is built by lysine 194, aspartate 247, serine 257, arginine 258, and asparagine 259. Catalysis depends on lysine 194, which acts as the Proton acceptor. Arginine 258 serves as a coordination point for NADPH. Residues valine 282 and glutamate 284 each contribute to the NADPH site.

Belongs to the NAD-dependent glycerol-3-phosphate dehydrogenase family.

It is found in the cytoplasm. The enzyme catalyses sn-glycerol 3-phosphate + NAD(+) = dihydroxyacetone phosphate + NADH + H(+). It carries out the reaction sn-glycerol 3-phosphate + NADP(+) = dihydroxyacetone phosphate + NADPH + H(+). The protein operates within membrane lipid metabolism; glycerophospholipid metabolism. Its function is as follows. Catalyzes the reduction of the glycolytic intermediate dihydroxyacetone phosphate (DHAP) to sn-glycerol 3-phosphate (G3P), the key precursor for phospholipid synthesis. The chain is Glycerol-3-phosphate dehydrogenase [NAD(P)+] from Streptococcus pneumoniae (strain CGSP14).